Here is a 200-residue protein sequence, read N- to C-terminus: Large ribosomal subunit protein bL25 (200 aa).

This sequence belongs to the bacterial ribosomal protein bL25 family. CTC subfamily. As to quaternary structure, part of the 50S ribosomal subunit; part of the 5S rRNA/L5/L18/L25 subcomplex. Contacts the 5S rRNA. Binds to the 5S rRNA independently of L5 and L18.

In terms of biological role, this is one of the proteins that binds to the 5S RNA in the ribosome where it forms part of the central protuberance. This Caldicellulosiruptor bescii (strain ATCC BAA-1888 / DSM 6725 / KCTC 15123 / Z-1320) (Anaerocellum thermophilum) protein is Large ribosomal subunit protein bL25.